Consider the following 230-residue polypeptide: Cytidylate kinase (230 aa).

10 to 18 (GFSSTGKST) serves as a coordination point for ATP.

Belongs to the cytidylate kinase family. Type 1 subfamily.

The protein resides in the cytoplasm. The enzyme catalyses CMP + ATP = CDP + ADP. It carries out the reaction dCMP + ATP = dCDP + ADP. This is Cytidylate kinase from Flavobacterium johnsoniae (strain ATCC 17061 / DSM 2064 / JCM 8514 / BCRC 14874 / CCUG 350202 / NBRC 14942 / NCIMB 11054 / UW101) (Cytophaga johnsonae).